Consider the following 216-residue polypeptide: Ras-related protein Rab11A (216 aa).

GTP is bound by residues 19-27 (GDSGVGKSN), 38-44 (CLESKST), 67-71 (DTAGQ), 125-128 (NKSD), and 155-157 (SAL). Positions 41–49 (SKSTIGVEF) match the Effector region motif. 2 S-geranylgeranyl cysteine lipidation sites follow: Cys213 and Cys214.

Belongs to the small GTPase superfamily. Rab family.

The protein resides in the cell membrane. The chain is Ras-related protein Rab11A (RAB11A) from Nicotiana tabacum (Common tobacco).